The sequence spans 258 residues: Hydroxyacylglutathione hydrolase (258 aa).

Residues His55, His57, Asp59, His60, His115, Asp132, and His170 each contribute to the Zn(2+) site.

This sequence belongs to the metallo-beta-lactamase superfamily. Glyoxalase II family. Monomer. Zn(2+) serves as cofactor.

The catalysed reaction is an S-(2-hydroxyacyl)glutathione + H2O = a 2-hydroxy carboxylate + glutathione + H(+). It participates in secondary metabolite metabolism; methylglyoxal degradation; (R)-lactate from methylglyoxal: step 2/2. Its function is as follows. Thiolesterase that catalyzes the hydrolysis of S-D-lactoyl-glutathione to form glutathione and D-lactic acid. This is Hydroxyacylglutathione hydrolase from Shewanella halifaxensis (strain HAW-EB4).